We begin with the raw amino-acid sequence, 40 residues long: Photosystem II reaction center protein X (40 aa).

Residues 10 to 30 (FFYSILFGAIVLGLLGGGFIF) traverse the membrane as a helical segment.

This sequence belongs to the PsbX family. Type 1 subfamily. In terms of assembly, PSII is composed of 1 copy each of membrane proteins PsbA, PsbB, PsbC, PsbD, PsbE, PsbF, PsbH, PsbI, PsbJ, PsbK, PsbL, PsbM, PsbT, PsbX, PsbY, PsbZ, Psb30/Ycf12, peripheral proteins PsbO, CyanoQ (PsbQ), PsbU, PsbV and a large number of cofactors. It forms dimeric complexes.

Its subcellular location is the cellular thylakoid membrane. In terms of biological role, involved in the binding and/or turnover of quinones at the Q(B) site of photosystem II (PSII). PSII is a light-driven water plastoquinone oxidoreductase, using light energy to abstract electrons from H(2)O, generating a proton gradient subsequently used for ATP formation. This Acaryochloris marina (strain MBIC 11017) protein is Photosystem II reaction center protein X.